The following is an 802-amino-acid chain: Ribosome-releasing factor 2, mitochondrial (802 aa).

Residues 13-297 (KKIRNIGIIA…AVVDFLPSPA (285 aa)) enclose the tr-type G domain. GTP is bound by residues 22–29 (AHIDAGKT), 86–90 (DTPGH), and 140–143 (NKMD).

This sequence belongs to the TRAFAC class translation factor GTPase superfamily. Classic translation factor GTPase family. EF-G/EF-2 subfamily.

Its subcellular location is the mitochondrion. In terms of biological role, mitochondrial GTPase that mediates the disassembly of ribosomes from messenger RNA at the termination of mitochondrial protein biosynthesis. Not involved in the GTP-dependent ribosomal translocation step during translation elongation. The sequence is that of Ribosome-releasing factor 2, mitochondrial from Yarrowia lipolytica (strain CLIB 122 / E 150) (Yeast).